A 289-amino-acid polypeptide reads, in one-letter code: Pyridoxal kinase PdxY (289 aa).

Residues serine 9 and 44 to 45 (TQ) contribute to the substrate site. Aspartate 112, valine 144, glutamate 149, and lysine 182 together coordinate ATP. Position 221 (aspartate 221) interacts with substrate.

The protein belongs to the pyridoxine kinase family. PdxY subfamily. As to quaternary structure, homodimer. It depends on Mg(2+) as a cofactor.

It carries out the reaction pyridoxal + ATP = pyridoxal 5'-phosphate + ADP + H(+). The protein operates within cofactor metabolism; pyridoxal 5'-phosphate salvage; pyridoxal 5'-phosphate from pyridoxal: step 1/1. In terms of biological role, pyridoxal kinase involved in the salvage pathway of pyridoxal 5'-phosphate (PLP). Catalyzes the phosphorylation of pyridoxal to PLP. This chain is Pyridoxal kinase PdxY, found in Vibrio campbellii (strain ATCC BAA-1116).